Here is a 311-residue protein sequence, read N- to C-terminus: Malate dehydrogenase (311 aa).

NAD(+)-binding positions include 7 to 13 (GAAGGIG) and D34. Residues R81 and R87 each coordinate substrate. NAD(+) is bound by residues N94 and 117-119 (ITN). N119 and R153 together coordinate substrate. Residue H177 is the Proton acceptor of the active site. M227 contacts NAD(+).

It belongs to the LDH/MDH superfamily. MDH type 1 family. Homodimer.

The enzyme catalyses (S)-malate + NAD(+) = oxaloacetate + NADH + H(+). Its function is as follows. Catalyzes the reversible oxidation of malate to oxaloacetate. The chain is Malate dehydrogenase from Histophilus somni (strain 129Pt) (Haemophilus somnus).